The chain runs to 509 residues: GMP synthase [glutamine-hydrolyzing] (509 aa).

One can recognise a Glutamine amidotransferase type-1 domain in the interval 4 to 194 (KVIVLDFGGQ…LYEICGLTPD (191 aa)). Cysteine 81 serves as the catalytic Nucleophile. Residues histidine 168 and glutamate 170 contribute to the active site. Positions 195–384 (WTMESFAQKA…LGLPESIVWR (190 aa)) constitute a GMPS ATP-PPase domain. 222-228 (SGGVDSS) contacts ATP.

As to quaternary structure, homodimer.

The catalysed reaction is XMP + L-glutamine + ATP + H2O = GMP + L-glutamate + AMP + diphosphate + 2 H(+). Its pathway is purine metabolism; GMP biosynthesis; GMP from XMP (L-Gln route): step 1/1. Its function is as follows. Catalyzes the synthesis of GMP from XMP. This chain is GMP synthase [glutamine-hydrolyzing], found in Carboxydothermus hydrogenoformans (strain ATCC BAA-161 / DSM 6008 / Z-2901).